We begin with the raw amino-acid sequence, 142 residues long: Succinate dehydrogenase subunit 6, mitochondrial (142 aa).

As to quaternary structure, component of complex II composed of eight subunits in plants: four classical SDH subunits SDH1, SDH2, SDH3 and SDH4 (a flavoprotein (FP), an iron-sulfur protein (IP), and a cytochrome b composed of a large and a small subunit.), as well as four subunits unknown in mitochondria from bacteria and heterotrophic eukaryotes.

The protein resides in the mitochondrion inner membrane. It participates in carbohydrate metabolism; tricarboxylic acid cycle. The protein is Succinate dehydrogenase subunit 6, mitochondrial of Oryza sativa subsp. japonica (Rice).